The following is a 667-amino-acid chain: Holliday junction recognition protein (667 aa).

Positions 78–126 are disordered; sequence LNGQAPEGDSESSGADTSLEENWPSCSSAMREASGDPRQRQPAVPGNTL. 3 positions are modified to phosphoserine: S169, S185, and S195. 2 disordered regions span residues 181–201 and 279–317; these read ISAK…GQGP and RRRP…EPGK. Over residues 279–297 the composition is skewed to basic residues; that stretch reads RRRPSRKQGLHKNRTHCPR. Phosphoserine occurs at positions 388, 424, 449, and 462. The tract at residues 443-530 is disordered; sequence YRSGSKSPGS…NSEPTGKAVW (88 aa). The span at 466 to 482 shows a compositional bias: basic and acidic residues; sequence GREKTERPGEALEDLRG. Over residues 496-515 the composition is skewed to low complexity; sequence SCPSPEGSPSRSPSHSQLSS. K554 is covalently cross-linked (Glycyl lysine isopeptide (Lys-Gly) (interchain with G-Cter in SUMO2)). Phosphoserine is present on S567. Positions 596 to 617 are disordered; the sequence is KRLNPDSPQQSSQKRSISPGCH. Residues 601–611 show a composition bias toward polar residues; the sequence is DSPQQSSQKRS. S613 bears the Phosphoserine mark.

In terms of assembly, interacts with CENPA (via CATD domain); the interaction is direct and specific for CENPA since it does not interact with H3.1- or H3.3-containing nucleosomes. Heterotrimer composed of HJURP, CENPA and histone H4, where HJURP interacts with the dimer formed by CENPA and histone H4 and prevents tetramerization of CENPA and H4. Identified in a centromere complex containing histones H2A, H2B and H4, and at least CENPA, CENPB, CENPC, CENPT, CENPN, HJURP, SUPT16H, SSRP1 and RSF1. Interacts with 14-3-3 family members in a phosphorylation-dependent manner. Interacts with MSH5 and NBN.

Its subcellular location is the nucleus. It is found in the nucleolus. The protein resides in the chromosome. It localises to the centromere. Centromeric protein that plays a central role in the incorporation and maintenance of histone H3-like variant CENPA at centromeres. Acts as a specific chaperone for CENPA and is required for the incorporation of newly synthesized CENPA molecules into nucleosomes at replicated centromeres. Prevents CENPA-H4 tetramerization and prevents premature DNA binding by the CENPA-H4 tetramer. Directly binds Holliday junctions. This Mus musculus (Mouse) protein is Holliday junction recognition protein (Hjurp).